The chain runs to 512 residues: Maturase K (512 aa).

It belongs to the intron maturase 2 family. MatK subfamily.

The protein resides in the plastid. The protein localises to the chloroplast. Functionally, usually encoded in the trnK tRNA gene intron. Probably assists in splicing its own and other chloroplast group II introns. This chain is Maturase K, found in Erythranthe guttata (Yellow monkey flower).